The primary structure comprises 157 residues: 2-C-methyl-D-erythritol 2,4-cyclodiphosphate synthase (157 aa).

Residues aspartate 8 and histidine 10 each coordinate a divalent metal cation. 4-CDP-2-C-methyl-D-erythritol 2-phosphate is bound by residues 8–10 (DIH) and 34–35 (HS). An a divalent metal cation-binding site is contributed by histidine 42. 4-CDP-2-C-methyl-D-erythritol 2-phosphate contacts are provided by residues 56-58 (DIG) and 132-135 (TTNE).

This sequence belongs to the IspF family. As to quaternary structure, homotrimer. The cofactor is a divalent metal cation.

It catalyses the reaction 4-CDP-2-C-methyl-D-erythritol 2-phosphate = 2-C-methyl-D-erythritol 2,4-cyclic diphosphate + CMP. Its pathway is isoprenoid biosynthesis; isopentenyl diphosphate biosynthesis via DXP pathway; isopentenyl diphosphate from 1-deoxy-D-xylulose 5-phosphate: step 4/6. In terms of biological role, involved in the biosynthesis of isopentenyl diphosphate (IPP) and dimethylallyl diphosphate (DMAPP), two major building blocks of isoprenoid compounds. Catalyzes the conversion of 4-diphosphocytidyl-2-C-methyl-D-erythritol 2-phosphate (CDP-ME2P) to 2-C-methyl-D-erythritol 2,4-cyclodiphosphate (ME-CPP) with a corresponding release of cytidine 5-monophosphate (CMP). This Synechococcus sp. (strain JA-3-3Ab) (Cyanobacteria bacterium Yellowstone A-Prime) protein is 2-C-methyl-D-erythritol 2,4-cyclodiphosphate synthase.